Consider the following 327-residue polypeptide: Malate dehydrogenase (327 aa).

An NAD(+)-binding site is contributed by 12-18; the sequence is GAAGQIA. The substrate site is built by R93 and R99. NAD(+)-binding positions include N106, Q113, and 130-132; that span reads VGN. 2 residues coordinate substrate: N132 and R163. Residue H188 is the Proton acceptor of the active site.

Belongs to the LDH/MDH superfamily. MDH type 2 family.

It carries out the reaction (S)-malate + NAD(+) = oxaloacetate + NADH + H(+). In terms of biological role, catalyzes the reversible oxidation of malate to oxaloacetate. This chain is Malate dehydrogenase, found in Paraburkholderia phytofirmans (strain DSM 17436 / LMG 22146 / PsJN) (Burkholderia phytofirmans).